The primary structure comprises 486 residues: G2/mitotic-specific cyclin-4 (486 aa).

Disordered regions lie at residues 1–80 (MRSY…SSNK) and 105–126 (VLLN…DKEN). Residues 25-41 (ANLSSNHTTAGQPSTSS) are compositionally biased toward polar residues. Over residues 108–123 (NDDDDETDDEFDDEED) the composition is skewed to acidic residues. Positions 122-184 (EDKENRYHDL…QSHTQDMRSI (63 aa)) form a coiled coil. One can recognise a Cyclin N-terminal domain in the interval 234-359 (EIFNYLHELE…FMIDVLEFDL (126 aa)).

This sequence belongs to the cyclin family. Cyclin AB subfamily. Interacts with IQG1.

Functionally, 2/mitotic-specific cyclin essential for the control of the cell cycle at the G2/M (mitosis) transition. G2/M cyclins accumulate steadily during G2 and are abruptly destroyed at mitosis. Degradation is necessary for the cell to exit from mitosis. Plays a role in morphogenesis by negatively regulating polarized growth. Through binding to CDC28 regulates cytokinesis, partly by phosphorylation of the actomyosin ring component IQG1. The polypeptide is G2/mitotic-specific cyclin-4 (CLB4) (Candida albicans (strain SC5314 / ATCC MYA-2876) (Yeast)).